Consider the following 330-residue polypeptide: uncharacterized protein (330 aa).

Transmembrane regions (helical) follow at residues 15–35, 41–61, 72–92, 102–122, 125–145, 175–195, 201–221, 238–258, 264–284, and 286–306; these read LTLI…KGVL, FFVA…WAMG, GWGW…GFLA, LGSV…SWLF, VIGG…SLIG, LWML…PFVS, VVAT…IALV, LAYA…YLAS, SLSS…NLIL, and EQLS…IYLI. EamA domains follow at residues 22-146 and 182-308; these read FLWG…LIGL and LSMA…LINQ.

The protein belongs to the EamA transporter family.

It is found in the cell membrane. This is an uncharacterized protein from Synechocystis sp. (strain ATCC 27184 / PCC 6803 / Kazusa).